The chain runs to 463 residues: Trigger factor (463 aa).

In terms of domain architecture, PPIase FKBP-type spans 162 to 243; it reads GDHVSIDLSA…VHSVKLKELP (82 aa). A compositionally biased stretch (polar residues) spans 427-444; that stretch reads SGNTIEPPTPVHTETITV. The disordered stretch occupies residues 427-463; it reads SGNTIEPPTPVHTETITVASGDEETEESAAEQGETEK.

This sequence belongs to the FKBP-type PPIase family. Tig subfamily.

It is found in the cytoplasm. It carries out the reaction [protein]-peptidylproline (omega=180) = [protein]-peptidylproline (omega=0). In terms of biological role, involved in protein export. Acts as a chaperone by maintaining the newly synthesized protein in an open conformation. Functions as a peptidyl-prolyl cis-trans isomerase. This chain is Trigger factor, found in Thermobifida fusca (strain YX).